The chain runs to 148 residues: Lysozyme C-3 (148 aa).

The signal sequence occupies residues 1–18; the sequence is MKTLLVLALLLLSVSVQA. The C-type lysozyme domain maps to 19-148; the sequence is KVYDRCEFAR…VSQYIRGCKL (130 aa). Disulfide bonds link C24–C146, C48–C134, C83–C99, and C95–C113. Active-site residues include E53 and D71.

It belongs to the glycosyl hydrolase 22 family. Monomer.

The protein localises to the secreted. It catalyses the reaction Hydrolysis of (1-&gt;4)-beta-linkages between N-acetylmuramic acid and N-acetyl-D-glucosamine residues in a peptidoglycan and between N-acetyl-D-glucosamine residues in chitodextrins.. Lysozymes have primarily a bacteriolytic function; those in tissues and body fluids are associated with the monocyte-macrophage system and enhance the activity of immunoagents. The sequence is that of Lysozyme C-3 from Sus scrofa (Pig).